The sequence spans 188 residues: dCTP deaminase (188 aa).

DCTP contacts are provided by residues 111 to 116 (KSTYAR), 135 to 137 (TLE), glutamine 156, tyrosine 170, and glutamine 180. The active-site Proton donor/acceptor is glutamate 137.

Belongs to the dCTP deaminase family. As to quaternary structure, homotrimer.

It catalyses the reaction dCTP + H2O + H(+) = dUTP + NH4(+). It functions in the pathway pyrimidine metabolism; dUMP biosynthesis; dUMP from dCTP (dUTP route): step 1/2. Functionally, catalyzes the deamination of dCTP to dUTP. In Cupriavidus necator (strain ATCC 17699 / DSM 428 / KCTC 22496 / NCIMB 10442 / H16 / Stanier 337) (Ralstonia eutropha), this protein is dCTP deaminase.